A 142-amino-acid polypeptide reads, in one-letter code: Small heat shock protein IbpB (142 aa).

The sHSP domain maps to 26-137 (SGESQSFPPY…PPQRIAINER (112 aa)).

It belongs to the small heat shock protein (HSP20) family. In terms of assembly, homodimer. Forms homomultimers of about 100-150 subunits at optimal growth temperatures. Conformation changes to oligomers at high temperatures or high ionic concentrations. The decrease in size of the multimers is accompanied by an increase in chaperone activity.

The protein localises to the cytoplasm. Functionally, associates with aggregated proteins, together with IbpA, to stabilize and protect them from irreversible denaturation and extensive proteolysis during heat shock and oxidative stress. Aggregated proteins bound to the IbpAB complex are more efficiently refolded and reactivated by the ATP-dependent chaperone systems ClpB and DnaK/DnaJ/GrpE. Its activity is ATP-independent. The sequence is that of Small heat shock protein IbpB from Salmonella typhi.